A 567-amino-acid polypeptide reads, in one-letter code: D-lactate dehydrogenase [cytochrome], mitochondrial (567 aa).

The N-terminal 56 residues, 1 to 56 (MAFASKFARSKTILSFLRPCRQLHSTPKSTGDVTVLSPVKGRRRLPTCWSSSLFPL), are a transit peptide targeting the mitochondrion. The FAD-binding PCMH-type domain maps to 142–319 (AVNIPDVVVF…TEITLRLQKI (178 aa)).

This sequence belongs to the FAD-binding oxidoreductase/transferase type 4 family. Homodimer. Requires FAD as cofactor. Expressed in leaves, stems, flowers and roots.

It is found in the mitochondrion. The enzyme catalyses (R)-lactate + 2 Fe(III)-[cytochrome c] = 2 Fe(II)-[cytochrome c] + pyruvate + 2 H(+). Inhibited by cyanide ions. Functionally, catalyzes the stereospecific oxidation of D-lactate to pyruvate. Involved in the detoxification of methylglyoxal and D-lactate, but probably not involved in the metabolization of glycolate. This Arabidopsis thaliana (Mouse-ear cress) protein is D-lactate dehydrogenase [cytochrome], mitochondrial.